A 460-amino-acid polypeptide reads, in one-letter code: Gastric inhibitory polypeptide receptor (460 aa).

The signal sequence occupies residues 1–18; the sequence is MPLRLLLLLLWLWGLQWA. The Extracellular segment spans residues 19–134; sequence ETDSEGQTTT…DQTLILERLQ (116 aa). 3 disulfides stabilise this stretch: C42–C66, C57–C99, and C80–C114. N-linked (GlcNAc...) asparagine glycans are attached at residues N58, N68, and N73. A helical transmembrane segment spans residues 135–155; that stretch reads IMYTVGYSLSLTTLLLALLIL. Topologically, residues 156 to 166 are cytoplasmic; the sequence is SLFRRLHCTRN. Residues 167 to 185 traverse the membrane as a helical segment; that stretch reads YIHMNLFTSFMLRAAAILT. At 186–222 the chain is on the extracellular side; it reads RDQLLPPLGPYTGDQAPTPWNQALAACRTAQIMTQYC. The chain crosses the membrane as a helical span at residues 223-243; the sequence is VGANYTWLLVEGVYLHHLLVI. The Cytoplasmic portion of the chain corresponds to 244–255; sequence VGRSEKGHFRCY. A helical transmembrane segment spans residues 256-276; the sequence is LLLGWGAPALFVIPWVIVRYL. At 277–297 the chain is on the extracellular side; that stretch reads RENTQCWERNEVKAIWWIIRT. Residues 298-318 traverse the membrane as a helical segment; the sequence is PILITILINFLIFIRILGILV. Topologically, residues 319–337 are cytoplasmic; it reads SKLRTRQMRCPDYRLRLAR. A helical transmembrane segment spans residues 338–358; that stretch reads STLTLVPLLGVHEVVFAPVTE. Topologically, residues 359–370 are extracellular; that stretch reads EQVEGSLRFAKL. The helical transmembrane segment at 371–391 threads the bilayer; sequence AFEIFLSSFQGFLVSVLYCFI. At 392–460 the chain is on the cytoplasmic side; sequence NKEVQSEIRQ…PGDEVLESYC (69 aa).

The protein belongs to the G-protein coupled receptor 2 family. May form homodimers and heterodimers with GLP1R. Post-translationally, N-glycosylation is required for cell surface expression and lengthens receptor half-life by preventing degradation in the ER.

Its subcellular location is the cell membrane. Functionally, this is a receptor for GIP. The activity of this receptor is mediated by G proteins which activate adenylyl cyclase. The chain is Gastric inhibitory polypeptide receptor (Gipr) from Mus musculus (Mouse).